Here is a 160-residue protein sequence, read N- to C-terminus: Ribosome maturation factor RimP (160 aa).

This sequence belongs to the RimP family.

It localises to the cytoplasm. Required for maturation of 30S ribosomal subunits. This is Ribosome maturation factor RimP from Orientia tsutsugamushi (strain Ikeda) (Rickettsia tsutsugamushi).